The following is a 359-amino-acid chain: Heme A synthase (359 aa).

5 helical membrane passes run 8–28 (IMSI…VVGG), 94–114 (LLGR…CYLK), 124–144 (LLLI…MVKS), 159–179 (GHLL…LIII), and 215–235 (IIIF…GLDA). H274 provides a ligand contact to heme. The next 3 helical transmembrane spans lie at 276–296 (WFGI…IILN), 303–323 (MGMV…ITLL), and 328–348 (ILAA…FLFI). Residue H334 coordinates heme.

Belongs to the COX15/CtaA family. Type 2 subfamily. As to quaternary structure, interacts with CtaB. The cofactor is heme b.

The protein localises to the cell membrane. The catalysed reaction is Fe(II)-heme o + 2 A + H2O = Fe(II)-heme a + 2 AH2. It participates in porphyrin-containing compound metabolism; heme A biosynthesis; heme A from heme O: step 1/1. Catalyzes the conversion of heme O to heme A by two successive hydroxylations of the methyl group at C8. The first hydroxylation forms heme I, the second hydroxylation results in an unstable dihydroxymethyl group, which spontaneously dehydrates, resulting in the formyl group of heme A. In Orientia tsutsugamushi (strain Boryong) (Rickettsia tsutsugamushi), this protein is Heme A synthase.